The primary structure comprises 123 residues: Small ribosomal subunit protein uS12 (123 aa).

The segment at 1–25 (MPTINQLIRKRRKSSLARKKSPALQ) is disordered. The span at 8–21 (IRKRRKSSLARKKS) shows a compositional bias: basic residues. D89 is subject to 3-methylthioaspartic acid.

It belongs to the universal ribosomal protein uS12 family. As to quaternary structure, part of the 30S ribosomal subunit. Contacts proteins S8 and S17. May interact with IF1 in the 30S initiation complex.

With S4 and S5 plays an important role in translational accuracy. Functionally, interacts with and stabilizes bases of the 16S rRNA that are involved in tRNA selection in the A site and with the mRNA backbone. Located at the interface of the 30S and 50S subunits, it traverses the body of the 30S subunit contacting proteins on the other side and probably holding the rRNA structure together. The combined cluster of proteins S8, S12 and S17 appears to hold together the shoulder and platform of the 30S subunit. In Chlamydia pneumoniae (Chlamydophila pneumoniae), this protein is Small ribosomal subunit protein uS12.